The primary structure comprises 279 residues: Diaminopimelate epimerase (279 aa).

Asn14 and Gln68 together coordinate substrate. Cys77 (proton donor) is an active-site residue. Substrate-binding positions include 78–79, Asn191, and 207–208; these read GN and ER. Cys217 serves as the catalytic Proton acceptor. Residue 218 to 219 participates in substrate binding; the sequence is GT.

Belongs to the diaminopimelate epimerase family. Homodimer.

It localises to the cytoplasm. The catalysed reaction is (2S,6S)-2,6-diaminopimelate = meso-2,6-diaminopimelate. The protein operates within amino-acid biosynthesis; L-lysine biosynthesis via DAP pathway; DL-2,6-diaminopimelate from LL-2,6-diaminopimelate: step 1/1. Functionally, catalyzes the stereoinversion of LL-2,6-diaminopimelate (L,L-DAP) to meso-diaminopimelate (meso-DAP), a precursor of L-lysine. The protein is Diaminopimelate epimerase of Methanothrix thermoacetophila (strain DSM 6194 / JCM 14653 / NBRC 101360 / PT) (Methanosaeta thermophila).